Here is a 509-residue protein sequence, read N- to C-terminus: Putative ATP-dependent RNA helicase QP509L (509 aa).

In terms of domain architecture, Helicase ATP-binding spans 110–262; it reads KKLLSPYGRF…KIIIHHLGQP (153 aa). An ATP-binding site is contributed by 123 to 130; that stretch reads LNTGLGKT. Residues 215-218 carry the DEAH box motif; sequence DEAH.

This sequence belongs to the DEAD box helicase family. DEAH subfamily.

The catalysed reaction is ATP + H2O = ADP + phosphate + H(+). This African swine fever virus (strain Badajoz 1971 Vero-adapted) (Ba71V) protein is Putative ATP-dependent RNA helicase QP509L.